A 424-amino-acid polypeptide reads, in one-letter code: Histidinol dehydrogenase (424 aa).

NAD(+)-binding residues include Y127, Q188, and N211. Substrate is bound by residues S234, Q256, and H259. Q256 and H259 together coordinate Zn(2+). Active-site proton acceptor residues include E322 and H323. Residues H323, D356, E410, and H415 each contribute to the substrate site. D356 is a Zn(2+) binding site. Position 415 (H415) interacts with Zn(2+).

The protein belongs to the histidinol dehydrogenase family. Zn(2+) is required as a cofactor.

It carries out the reaction L-histidinol + 2 NAD(+) + H2O = L-histidine + 2 NADH + 3 H(+). It functions in the pathway amino-acid biosynthesis; L-histidine biosynthesis; L-histidine from 5-phospho-alpha-D-ribose 1-diphosphate: step 9/9. Its function is as follows. Catalyzes the sequential NAD-dependent oxidations of L-histidinol to L-histidinaldehyde and then to L-histidine. The chain is Histidinol dehydrogenase from Methanococcus maripaludis (strain DSM 14266 / JCM 13030 / NBRC 101832 / S2 / LL).